Here is a 458-residue protein sequence, read N- to C-terminus: UDP-N-acetylmuramoylalanine--D-glutamate ligase (458 aa).

124 to 130 (GSDGKTT) contributes to the ATP binding site.

This sequence belongs to the MurCDEF family.

It is found in the cytoplasm. It catalyses the reaction UDP-N-acetyl-alpha-D-muramoyl-L-alanine + D-glutamate + ATP = UDP-N-acetyl-alpha-D-muramoyl-L-alanyl-D-glutamate + ADP + phosphate + H(+). The protein operates within cell wall biogenesis; peptidoglycan biosynthesis. Cell wall formation. Catalyzes the addition of glutamate to the nucleotide precursor UDP-N-acetylmuramoyl-L-alanine (UMA). The chain is UDP-N-acetylmuramoylalanine--D-glutamate ligase from Clostridium botulinum (strain Okra / Type B1).